The following is a 153-amino-acid chain: 3-hydroxyacyl-[acyl-carrier-protein] dehydratase FabZ (153 aa).

Residue histidine 54 is part of the active site.

The protein belongs to the thioester dehydratase family. FabZ subfamily.

Its subcellular location is the cytoplasm. It carries out the reaction a (3R)-hydroxyacyl-[ACP] = a (2E)-enoyl-[ACP] + H2O. Involved in unsaturated fatty acids biosynthesis. Catalyzes the dehydration of short chain beta-hydroxyacyl-ACPs and long chain saturated and unsaturated beta-hydroxyacyl-ACPs. In Shewanella frigidimarina (strain NCIMB 400), this protein is 3-hydroxyacyl-[acyl-carrier-protein] dehydratase FabZ.